We begin with the raw amino-acid sequence, 294 residues long: Transcription repressor OFP14 (294 aa).

Residues 49–60 show a composition bias toward basic residues; it reads SFKHRRRSSKTR. 3 disordered regions span residues 49 to 72, 96 to 129, and 141 to 185; these read SFKH…HQDS, DDQE…DDDD, and AVYD…SRST. 2 stretches are compositionally biased toward basic and acidic residues: residues 61–72 and 96–117; these read FSKEEPVYHQDS and DDQE…RESS. Over residues 118–128 the composition is skewed to acidic residues; it reads SDDSDDDDDDD. Residues 164-185 show a composition bias toward low complexity; it reads SSEGRPSMETTSTSSERQSRST. The region spanning 195–259 is the OVATE domain; the sequence is VLRYTDEPQE…LSAFVDLIIA (65 aa).

In terms of assembly, interacts with KNAT2 and KNAT3. Expressed in roots, rosette and cauline leaves, shoots, stems, flower buds and siliques.

It localises to the nucleus. Its function is as follows. Transcriptional repressor that may regulate multiple aspects of plant growth and development through the regulation of BEL1-LIKE (BLH) and KNOX TALE (KNAT) homeodomain transcription factors. The sequence is that of Transcription repressor OFP14 (OFP14) from Arabidopsis thaliana (Mouse-ear cress).